A 433-amino-acid chain; its full sequence is 23S rRNA (uracil(1939)-C(5))-methyltransferase RlmD (433 aa).

Residues 10-68 (RTTTRQIITVSVNDLDSFGQGVARHNGKTLFIPGLLPQENAEVTVTEDKKQYARAKVVR) enclose the TRAM domain. [4Fe-4S] cluster-binding residues include Cys81, Cys87, Cys90, and Cys162. Gln265, Phe294, Asn299, Glu315, Asn342, and Asp363 together coordinate S-adenosyl-L-methionine. The active-site Nucleophile is Cys389.

It belongs to the class I-like SAM-binding methyltransferase superfamily. RNA M5U methyltransferase family. RlmD subfamily.

It catalyses the reaction uridine(1939) in 23S rRNA + S-adenosyl-L-methionine = 5-methyluridine(1939) in 23S rRNA + S-adenosyl-L-homocysteine + H(+). Catalyzes the formation of 5-methyl-uridine at position 1939 (m5U1939) in 23S rRNA. This is 23S rRNA (uracil(1939)-C(5))-methyltransferase RlmD from Escherichia coli (strain UTI89 / UPEC).